The chain runs to 281 residues: Radiation response metalloprotease IrrE (281 aa).

Histidine 82 provides a ligand contact to Zn(2+). Glutamate 83 is a catalytic residue. The Zn(2+) site is built by histidine 86 and glutamate 113. The segment at 262–281 (LPAGRSEPDADKPEAPGDQS) is disordered. The span at 267-281 (SEPDADKPEAPGDQS) shows a compositional bias: basic and acidic residues.

As to quaternary structure, interacts with DdrOC.

Its activity is regulated as follows. Protease activity is inhibited by EDTA. In terms of biological role, plays a central regulatory role in DNA repair and protection pathways in response to radiation stress. Acts as a site-specific metalloprotease that cleaves and inactivates the repressor proteins DdrOC and DdrOP3, resulting in induced expression of genes required for DNA repair and cell survival after exposure to radiation. The chain is Radiation response metalloprotease IrrE from Deinococcus deserti (strain DSM 17065 / CIP 109153 / LMG 22923 / VCD115).